Here is a 751-residue protein sequence, read N- to C-terminus: MAAATERTDELVREYLLFRGFTAALKQLDAEIKADREKGFRVDKIVEQLQQFVQSYDLAALRDYWGYLDRRLFSRLEDMYRPTVNKLKTSLYRYYLVHTVQTGRNDKAQEFFLKQASELQNQAEWKDWFVLPFLPAPDSNPTFATYFSRQWADTFIVSLHNFLSVLFQCMPVPVILNLEAECHRSSLIQEENESLRHKLFALQAESSRMKKEELEVEEAVVHHKLPAYVANMDRLGDSELDMTCSQRSTAHSLQSRGGFLSSLLSQSKKGPARPAQPSGASPTQTGSVLLGKKEPANHQSAKGKEGTASSKDGKSHFSGLVAGESSSLQQRQKRLQEHGKERRELLSKGTSQVQSAEKKADISTSEPEPCSEPQADQAETSTKMPASSTESVGVRQEQPFIVLSQEEYGEHHSSIMYCRVDCSGRRVASLDVDGVIKVWSFNPIMQTKASSISKSPLLSLEWATKRDRLLLLGSGVGTVRLYDTEAKKNLCEISIDEDMPRILSLACSPSGASFVCSAAAQSPISHMDFSVVTSGGKSMNQVPGKLLLWDTKTMKQQLQFSLEPEPIAINCTAFNHNGNLLVTGAADGIVRLFDMQQHECAMSWKAHDGEVYSVEFSYDENTVYSIGEDGKFIQWNIHKSGLKISEYALPSEATGPFVLSGYSGYKQVQFPRGRLFAFDSEGNYMLTCSSTGGVIFKLNGEDKVLESCLSLGGHRAPVVTVDWSTAMDCGTCLTASMDGKIKLTTLLAQKS.

Residues 188-212 (IQEENESLRHKLFALQAESSRMKKE) are a coiled coil. Residues 264-395 (LSQSKKGPAR…ASSTESVGVR (132 aa)) are disordered. Positions 278–287 (SGASPTQTGS) are enriched in polar residues. A compositionally biased stretch (basic and acidic residues) spans 334–346 (RLQEHGKERRELL). Over residues 377-391 (QAETSTKMPASSTES) the composition is skewed to polar residues. 7 WD repeats span residues 410–449 (EHHSSIMYCRVDCSGRRVASLDVDGVIKVWSFNPIMQTKA), 452–492 (ISKS…NLCE), 497–559 (EDMP…QQLQ), 564–603 (PEPIAINCTAFNHNGNLLVTGAADGIVRLFDMQQHECAMS), 606–645 (AHDGEVYSVEFSYDENTVYSIGEDGKFIQWNIHKSGLKIS), 668–706 (VQFPRGRLFAFDSEGNYMLTCSSTGGVIFKLNGEDKVLE), and 713–751 (GHRAPVVTVDWSTAMDCGTCLTASMDGKIKLTTLLAQKS).

Belongs to the WD repeat WDR91 family.

The protein resides in the early endosome membrane. Its subcellular location is the late endosome membrane. Its function is as follows. Functions as a negative regulator of the PI3 kinase/PI3K activity associated with endosomal membranes. By modifying the phosphatidylinositol 3-phosphate/PtdInsP3 content of endosomal membranes may regulate endosome fusion, recycling, sorting and early to late endosome transport. This is WD repeat-containing protein 91 from Gallus gallus (Chicken).